Reading from the N-terminus, the 720-residue chain is Polyribonucleotide nucleotidyltransferase (720 aa).

Residues Asp-484 and Asp-490 each contribute to the Mg(2+) site. One can recognise a KH domain in the interval 551–610; it reads PRMYKINIDPSKIGSVIGSGGKTIRSIIEQTNTTVDIENDGTVVIGATDEASAKKAIKII. The region spanning 620–688 is the S1 motif domain; that stretch reads GSIYTGKVTR…NQGRVNLSHR (69 aa). The tract at residues 697-720 is disordered; sequence PISRNRDSQPRRPGPFRPSDRSNS.

Belongs to the polyribonucleotide nucleotidyltransferase family. Requires Mg(2+) as cofactor.

It is found in the cytoplasm. It catalyses the reaction RNA(n+1) + phosphate = RNA(n) + a ribonucleoside 5'-diphosphate. Its function is as follows. Involved in mRNA degradation. Catalyzes the phosphorolysis of single-stranded polyribonucleotides processively in the 3'- to 5'-direction. This Dehalococcoides mccartyi (strain CBDB1) protein is Polyribonucleotide nucleotidyltransferase.